The primary structure comprises 1399 residues: MTSAAELKKPPLAPKPKLVGTNNKPPPPPIAPKPDIGSASVPRLTKKTKPAIAPKPKVPTNSVVQDIKHPPSKKPTLNLEEREPELPESTGKSNCKDVRDPHSDYILPTCSCSSGCIHEPRTRETQCVEQLVLEPLGMKENLENSKNGESSKRGSSWDSSSEKCRGQSGVVLKASILEEKLKEVLTQQRSPCGSPGRHRAPKKPEMNGDHSCTRQIRIEFADVSSSLTGFEKVPAHHNCHPQLPRDESQTLKTCQDGSAESRGHTDSCEPENKRVASDGISQKTEVKGLGPLEIHLLPYTSKFPTPKPRKTHAAARLRRQKHVDTPGESTEEPGNSNNGSSCLLEDYCLKNNKVSVLRQNALYNQGPVDEVRPANQRALTGDSNSGGQDSVGSQKAVQQQTPSLDTDSSLTSDSSGSGVSPAVDKETTYTQCSTQPLSLPKQVTSACTDQPPATCNPEVSAPPIQKESSSSRIIPKKPQRHSLPAAGVLKKAASEELVEKSSSGKETNVEKGLHRNYLHHPGPPNHGASASPFDMPNPTSEKPVWKLPHPILPFSGSPEALKRVTLSLNNEPSVSLTKPRAKSLSAVDADRCNKPCKDPPKKTSFKKLINVKLSIGFIKSDFQKIRSKSCQHGDVSAGHPLAREPKGLESDWQGLATGEEKRSKPTKAHSAENCSLESQKVKSWGQSSAVNGQRAESLDDRILSRHTSCTGDFGPEYENVRHYEEIPEYENLPFVMAGRNTPDLGWQNSSSVEDTDASLYEVEEPYNAPDGQLQLDPRHQPCSSGTSQEGKDALHLGLSDLPSDEEVINSSDEDDVSSESSKGEPDPLEDKQDEDAGMKSKVHHIAKEIMSSEKVFVDVLKLLHIDFRGAVAHASRQLGKPVIEDRILNQILYYLPQLYELNRDLLKELEERMLTWTEQQRIADIFVKKGPYLKMYSTYIKEFDKNVALLDEQCKKNPGFAAVVREFEMSPRCANLALKHYLLKPVQRIPQYRLLLTDYLKNLLEDSVDHRDTQDALAVVIEVANHANDTMKQGDNFQKLMQIQYSLSGHHEIVQPGRVFLKEGTLMKLSRKVMQPRMFFLFNDALLYTTPMQSGMYKLNNMLSLAGMKVRKPTQEAYQNELKIESVERSFILSASSAAERDDWLEAISSSIEEYAKKRITFCPSRSLDEDSERKEEVSPLGAKAPIWIPDTRATMCMICTSEFTLTWRRHHCRACGKIVCQACSSNKYGLDYLKGQLARVCEHCFQELQKLDHQLSPRVGSPGNHKSPSSALSSVLHSIPSGRKQKKIPAALKEVSANTEDSTMSGYLYRSKGSKKPWKHLWFVIKNKVLYTYAASEDVAALESQPLLGFTVTLVKDENSESKVFQLLHKGMVFYVFKADDAHSTQRWIDAFQEGTVL.

Disordered stretches follow at residues 1 to 99 (MTSA…KDVR), 138 to 164 (MKENLENSKNGESSKRGSSWDSSSEKC), 185 to 210 (LTQQRSPCGSPGRHRAPKKPEMNGDH), 235 to 281 (AHHN…DGIS), 299 to 341 (YTSK…NGSS), and 367 to 479 (PVDE…KKPQ). Over residues 50–60 (PAIAPKPKVPT) the composition is skewed to low complexity. The span at 259–276 (AESRGHTDSCEPENKRVA) shows a compositional bias: basic and acidic residues. The segment covering 307 to 321 (KPRKTHAAARLRRQK) has biased composition (basic residues). Polar residues-rich tracts occupy residues 332-341 (EPGNSNNGSS) and 377-402 (RALTGDSNSGGQDSVGSQKAVQQQTP). A compositionally biased stretch (low complexity) spans 403–418 (SLDTDSSLTSDSSGSG). Polar residues predominate over residues 428 to 453 (TYTQCSTQPLSLPKQVTSACTDQPPA). 3 positions are modified to phosphoserine: serine 494, serine 531, and serine 583. A disordered region spans residues 515-542 (RNYLHHPGPPNHGASASPFDMPNPTSEK). 2 disordered regions span residues 631-650 (QHGDVSAGHPLAREPKGLES) and 657-678 (TGEEKRSKPTKAHSAENCSLES). Phosphoserine occurs at positions 670 and 697. A disordered region spans residues 768–840 (APDGQLQLDP…KQDEDAGMKS (73 aa)). Residues 802–817 (PSDEEVINSSDEDDVS) are compositionally biased toward acidic residues. Residues 821–838 (SKGEPDPLEDKQDEDAGM) show a composition bias toward basic and acidic residues. One can recognise a DH domain in the interval 841–1030 (KVHHIAKEIM…IEVANHANDT (190 aa)). The PH 1 domain occupies 1059–1153 (VFLKEGTLMK…WLEAISSSIE (95 aa)). Phosphoserine is present on serine 1167. The segment at 1191 to 1250 (DTRATMCMICTSEFTLTWRRHHCRACGKIVCQACSSNKYGLDYLKGQLARVCEHCFQELQ) adopts an FYVE-type zinc-finger fold. The Zn(2+) site is built by cysteine 1197, cysteine 1200, cysteine 1213, cysteine 1216, cysteine 1221, cysteine 1224, cysteine 1242, and cysteine 1245. The region spanning 1302–1398 (DSTMSGYLYR…WIDAFQEGTV (97 aa)) is the PH 2 domain.

Its subcellular location is the cytoplasm. It is found in the cytoskeleton. Its function is as follows. May activate CDC42, a member of the Ras-like family of Rho- and Rac proteins, by exchanging bound GDP for free GTP. May play a role in regulating the actin cytoskeleton and cell shape. This is FYVE, RhoGEF and PH domain-containing protein 6 (Fgd6) from Mus musculus (Mouse).